Consider the following 648-residue polypeptide: Shugoshin (648 aa).

Coiled coils occupy residues 95–122 (LMIK…RLSV) and 208–273 (DDRA…KDEA). 5 disordered regions span residues 188-239 (KVVG…RSSR), 262-334 (EADK…QEDA), 367-443 (VYRD…RPRR), 483-518 (TNRK…AAED), and 628-648 (HRAR…KVST). 2 stretches are compositionally biased toward basic and acidic residues: residues 200 to 217 (VRGE…HQEA) and 262 to 273 (EADKSRSAKDEA). The segment covering 306–315 (ASGTLTQSNE) has biased composition (polar residues). Composition is skewed to basic and acidic residues over residues 424-440 (IVVD…DATR) and 490-509 (QREG…HEQD).

The protein belongs to the shugoshin family.

Its subcellular location is the nucleus. It localises to the chromosome. It is found in the centromere. Its function is as follows. Plays a central role in chromosome cohesion during cell division by preventing premature dissociation of cohesin complex from centromeres after prophase, when most of cohesin complex dissociates from chromosomes arms. May act by protecting RAD21 and or REC8 from cleavage by ESP1/separase. The protein is Shugoshin (SGO1) of Eremothecium gossypii (strain ATCC 10895 / CBS 109.51 / FGSC 9923 / NRRL Y-1056) (Yeast).